Here is a 146-residue protein sequence, read N- to C-terminus: Snaclec stejaggregin-B subunit beta-2 (146 aa).

Residues 1–23 (MGRFIFVSFGLLVVFLSLSGSGA) form the signal peptide. Residues 32–143 (YDLYCYRVFQ…CSQTYPFVCK (112 aa)) enclose the C-type lectin domain. Intrachain disulfides connect cysteine 53–cysteine 142 and cysteine 119–cysteine 134.

The protein belongs to the snaclec family. As to quaternary structure, heteromultimer; disulfide-linked. As to expression, expressed by the venom gland.

The protein localises to the secreted. Interferes with one step of hemostasis (modulation of platelet aggregation, or coagulation cascade, for example). In Trimeresurus stejnegeri (Chinese green tree viper), this protein is Snaclec stejaggregin-B subunit beta-2.